The following is a 177-amino-acid chain: Small ribosomal subunit protein uS5 (177 aa).

An S5 DRBM domain is found at 21–84; that stretch reads LLDRVVKIKR…KQASRSMIHV (64 aa).

The protein belongs to the universal ribosomal protein uS5 family. As to quaternary structure, part of the 30S ribosomal subunit. Contacts proteins S4 and S8.

Its function is as follows. With S4 and S12 plays an important role in translational accuracy. Located at the back of the 30S subunit body where it stabilizes the conformation of the head with respect to the body. This chain is Small ribosomal subunit protein uS5, found in Rhodopirellula baltica (strain DSM 10527 / NCIMB 13988 / SH1).